Consider the following 359-residue polypeptide: Probable deacetylase AF_0130 (359 aa).

Residue histidine 126 is the Proton donor/acceptor of the active site. Residues aspartate 162, histidine 164, and aspartate 249 each coordinate Zn(2+).

The protein belongs to the histone deacetylase family. It depends on Zn(2+) as a cofactor.

Probable deacetylase. In Archaeoglobus fulgidus (strain ATCC 49558 / DSM 4304 / JCM 9628 / NBRC 100126 / VC-16), this protein is Probable deacetylase AF_0130.